Consider the following 173-residue polypeptide: Crossover junction endodeoxyribonuclease RuvC (173 aa).

Residues Asp8, Glu67, and Asp139 contribute to the active site. Residues Asp8, Glu67, and Asp139 each coordinate Mg(2+).

This sequence belongs to the RuvC family. Homodimer which binds Holliday junction (HJ) DNA. The HJ becomes 2-fold symmetrical on binding to RuvC with unstacked arms; it has a different conformation from HJ DNA in complex with RuvA. In the full resolvosome a probable DNA-RuvA(4)-RuvB(12)-RuvC(2) complex forms which resolves the HJ. Requires Mg(2+) as cofactor.

The protein localises to the cytoplasm. The enzyme catalyses Endonucleolytic cleavage at a junction such as a reciprocal single-stranded crossover between two homologous DNA duplexes (Holliday junction).. The RuvA-RuvB-RuvC complex processes Holliday junction (HJ) DNA during genetic recombination and DNA repair. Endonuclease that resolves HJ intermediates. Cleaves cruciform DNA by making single-stranded nicks across the HJ at symmetrical positions within the homologous arms, yielding a 5'-phosphate and a 3'-hydroxyl group; requires a central core of homology in the junction. The consensus cleavage sequence is 5'-(A/T)TT(C/G)-3'. Cleavage occurs on the 3'-side of the TT dinucleotide at the point of strand exchange. HJ branch migration catalyzed by RuvA-RuvB allows RuvC to scan DNA until it finds its consensus sequence, where it cleaves and resolves the cruciform DNA. In Vibrio cholerae serotype O1 (strain ATCC 39541 / Classical Ogawa 395 / O395), this protein is Crossover junction endodeoxyribonuclease RuvC.